Here is a 275-residue protein sequence, read N- to C-terminus: Aldo-keto reductase MSMEG_2408/MSMEI_2347 (275 aa).

Y49 (proton donor) is an active-site residue. NADPH-binding residues include L189, I227, K229, S230, V231, R235, S238, and N239. K262 is covalently cross-linked (Isoglutamyl lysine isopeptide (Lys-Gln) (interchain with Q-Cter in protein Pup)).

It belongs to the aldo/keto reductase family.

This is Aldo-keto reductase MSMEG_2408/MSMEI_2347 from Mycolicibacterium smegmatis (strain ATCC 700084 / mc(2)155) (Mycobacterium smegmatis).